Reading from the N-terminus, the 187-residue chain is Protein GrpE (187 aa).

The tract at residues 1-26 (MNDLKNAENGPDEADTPQGAPSQEPD) is disordered.

This sequence belongs to the GrpE family. As to quaternary structure, homodimer.

Its subcellular location is the cytoplasm. In terms of biological role, participates actively in the response to hyperosmotic and heat shock by preventing the aggregation of stress-denatured proteins, in association with DnaK and GrpE. It is the nucleotide exchange factor for DnaK and may function as a thermosensor. Unfolded proteins bind initially to DnaJ; upon interaction with the DnaJ-bound protein, DnaK hydrolyzes its bound ATP, resulting in the formation of a stable complex. GrpE releases ADP from DnaK; ATP binding to DnaK triggers the release of the substrate protein, thus completing the reaction cycle. Several rounds of ATP-dependent interactions between DnaJ, DnaK and GrpE are required for fully efficient folding. This Methylocella silvestris (strain DSM 15510 / CIP 108128 / LMG 27833 / NCIMB 13906 / BL2) protein is Protein GrpE.